A 224-amino-acid polypeptide reads, in one-letter code: Cysteine-rich hydrophobic domain-containing protein 1 (224 aa).

Residues 1 to 80 are disordered; sequence MSILLPNMAE…PPPRVVSEEH (80 aa). Residues 13-25 are compositionally biased toward acidic residues; it reads TISELEEEEEEEA. Positions 26 to 40 are enriched in low complexity; the sequence is ATSSSSPSSSSSVSG. The segment covering 41-69 has biased composition (acidic residues); the sequence is PDDDEEDEEEEEEEEEEEEEEEEEEEEEA. A coiled-coil region spans residues 42–70; that stretch reads DDDEEDEEEEEEEEEEEEEEEEEEEEEAP.

This sequence belongs to the CHIC family. In terms of processing, palmitoylated. In terms of tissue distribution, equally expressed in various parts of the brain.

Its subcellular location is the cell membrane. It localises to the cytoplasmic vesicle. This chain is Cysteine-rich hydrophobic domain-containing protein 1 (CHIC1), found in Homo sapiens (Human).